Here is a 366-residue protein sequence, read N- to C-terminus: Chorismate synthase (366 aa).

Arg48 is an NADP(+) binding site. FMN-binding positions include 125-127, Gly285, 300-304, and Arg327; these read RSS and KPTPS.

Belongs to the chorismate synthase family. FMNH2 is required as a cofactor.

It catalyses the reaction 5-O-(1-carboxyvinyl)-3-phosphoshikimate = chorismate + phosphate. It participates in metabolic intermediate biosynthesis; chorismate biosynthesis; chorismate from D-erythrose 4-phosphate and phosphoenolpyruvate: step 7/7. In terms of biological role, catalyzes the anti-1,4-elimination of the C-3 phosphate and the C-6 proR hydrogen from 5-enolpyruvylshikimate-3-phosphate (EPSP) to yield chorismate, which is the branch point compound that serves as the starting substrate for the three terminal pathways of aromatic amino acid biosynthesis. This reaction introduces a second double bond into the aromatic ring system. The sequence is that of Chorismate synthase from Methanococcoides burtonii (strain DSM 6242 / NBRC 107633 / OCM 468 / ACE-M).